Consider the following 684-residue polypeptide: uncharacterized protein (684 aa).

2 disordered regions span residues 267–353 (MGAR…TCTD) and 388–449 (SVAS…AERE). Positions 316 to 326 (GMTSAKASTSY) are enriched in polar residues. Residues 438–449 (RPTEARRRAERE) show a composition bias toward basic and acidic residues.

This is an uncharacterized protein from Colorado tick fever virus (strain USA/Florio N-7180) (CTFV).